Here is a 463-residue protein sequence, read N- to C-terminus: A-type ATP synthase subunit B (463 aa).

Belongs to the ATPase alpha/beta chains family. In terms of assembly, has multiple subunits with at least A(3), B(3), C, D, E, F, H, I and proteolipid K(x).

It localises to the cell membrane. In terms of biological role, component of the A-type ATP synthase that produces ATP from ADP in the presence of a proton gradient across the membrane. The B chain is a regulatory subunit. This chain is A-type ATP synthase subunit B, found in Methanothermobacter thermautotrophicus (strain ATCC 29096 / DSM 1053 / JCM 10044 / NBRC 100330 / Delta H) (Methanobacterium thermoautotrophicum).